Consider the following 201-residue polypeptide: Anthranilate synthase component II (201 aa).

One can recognise a Glutamine amidotransferase type-1 domain in the interval 3–196 (DILLLDNIDS…LAWAQRKLEP (194 aa)). 57–59 (GPG) contributes to the L-glutamine binding site. Cysteine 84 serves as the catalytic Nucleophile; for GATase activity. Residues glutamine 88 and 134 to 135 (SL) contribute to the L-glutamine site. Active-site for GATase activity residues include histidine 170 and glutamate 172.

As to quaternary structure, tetramer of two components I and two components II.

It catalyses the reaction chorismate + L-glutamine = anthranilate + pyruvate + L-glutamate + H(+). The catalysed reaction is N-(5-phospho-beta-D-ribosyl)anthranilate + diphosphate = 5-phospho-alpha-D-ribose 1-diphosphate + anthranilate. It participates in amino-acid biosynthesis; L-tryptophan biosynthesis; L-tryptophan from chorismate: step 1/5. It functions in the pathway amino-acid biosynthesis; L-tryptophan biosynthesis; L-tryptophan from chorismate: step 2/5. The sequence is that of Anthranilate synthase component II (trpG-TRPD) from Shigella dysenteriae.